Consider the following 238-residue polypeptide: 5-amino-6-(5-phospho-D-ribitylamino)uracil phosphatase YigB (238 aa).

Residue D16 is the Nucleophile of the active site. 3 residues coordinate Mg(2+): D16, D18, and D188. Residue 16-18 (DLD) coordinates substrate.

It belongs to the HAD-like hydrolase superfamily. The cofactor is Mg(2+). Requires Mn(2+) as cofactor. Co(2+) serves as cofactor. It depends on Zn(2+) as a cofactor.

The enzyme catalyses 5-amino-6-(5-phospho-D-ribitylamino)uracil + H2O = 5-amino-6-(D-ribitylamino)uracil + phosphate. The protein operates within cofactor biosynthesis; riboflavin biosynthesis; 5-amino-6-(D-ribitylamino)uracil from GTP: step 4/4. Its function is as follows. Catalyzes the dephosphorylation of 5-amino-6-(5-phospho-D-ribitylamino)uracil, and thus could be involved in the riboflavin biosynthesis pathway. Is also able to dephosphorylate flavin mononucleotide (FMN) and other phosphoric acid esters. YigB is important for the formation of dormant persister cells. The sequence is that of 5-amino-6-(5-phospho-D-ribitylamino)uracil phosphatase YigB (yigB) from Escherichia coli (strain K12).